A 599-amino-acid polypeptide reads, in one-letter code: Fructan 1-exohydrolase (599 aa).

The signal sequence occupies residues 1-16 (MAQAWAFLLLPALALA). Aspartate 78 is a catalytic residue. N-linked (GlcNAc...) asparagine glycosylation is found at asparagine 171, asparagine 239, and asparagine 251. A disulfide bridge links cysteine 449 with cysteine 495.

Belongs to the glycosyl hydrolase 32 family.

The enzyme catalyses Hydrolysis of terminal, non-reducing (2-&gt;1)-linked beta-D-fructofuranose residues in fructans.. Its activity is regulated as follows. Inhibited by sucrose. Hydrolyzes inulin-type beta-(2,1)-fructans. May play a role as a beta-(2,1)-trimmer during graminan biosynthesis. The sequence is that of Fructan 1-exohydrolase from Hordeum vulgare (Barley).